A 204-amino-acid polypeptide reads, in one-letter code: MQKLTPRQAEILSFIKRCLEDHGFPPTRAEIAQELGFKSPNAAEEHLKALARKGAIEMTPGASRGIRIPGFEPHAANDDEGLPVIGRVAAGAPILAEQNIEESCRINPAFFNPRADYLLRVRGMSMKDIGILDGDLLAVHVTREARNGQVVVARIGEEVTVKRFKREGSKVWLLAENPEFAPIEVDLKEQELIIEGLSVGVIRR.

Residues 28–48 constitute a DNA-binding region (H-T-H motif); sequence RAEIAQELGFKSPNAAEEHLK. Residues Ser-125 and Lys-162 each act as for autocatalytic cleavage activity in the active site.

It belongs to the peptidase S24 family. As to quaternary structure, homodimer.

It catalyses the reaction Hydrolysis of Ala-|-Gly bond in repressor LexA.. Its function is as follows. Represses a number of genes involved in the response to DNA damage (SOS response), including recA and lexA. In the presence of single-stranded DNA, RecA interacts with LexA causing an autocatalytic cleavage which disrupts the DNA-binding part of LexA, leading to derepression of the SOS regulon and eventually DNA repair. This is LexA repressor from Pseudomonas aeruginosa (strain LESB58).